The chain runs to 261 residues: Acidic leucine-rich nuclear phosphoprotein 32 family member A (261 aa).

4 LRR repeats span residues 16-37 (QITELNLDNCRSTSIVGLTDEY), 39-60 (ALESLSLINVGLTTLKGFPKLP), 61-83 (NLKKLELSDNRISSGLNYLTTSP), and 84-105 (KLQYLNLSGNKIKDLETLKPLE). Positions 118–156 (NDATQVDNYREKIFKMLPSLNFLDGFDCNDEEVQSDGDD) constitute an LRRCT domain. Composition is skewed to acidic residues over residues 145–185 (CNDE…EEAN) and 194–229 (YNDDLEEDNSDWEGEDEAGEEDEEEDSDIDDADGDA). A disordered region spans residues 145 to 261 (CNDEEVQSDG…VRGKKRKHDG (117 aa)). Basic and acidic residues predominate over residues 238 to 252 (AKDKDGEKEADESQV).

Belongs to the ANP32 family. Phosphorylated on serine residues.

It localises to the nucleus. The protein localises to the cytoplasm. In terms of biological role, implicated in a number of cellular processes, including proliferation, differentiation, caspase-dependent and caspase-independent apoptosis, suppression of transformation (tumor suppressor), inhibition of protein phosphatase 2A, regulation of mRNA trafficking and stability, and inhibition of acetyltransferases as part of the INHAT (inhibitor of histone acetyltransferases) complex. The protein is Acidic leucine-rich nuclear phosphoprotein 32 family member A (Anp32a) of Drosophila melanogaster (Fruit fly).